We begin with the raw amino-acid sequence, 308 residues long: UDP-3-O-acyl-N-acetylglucosamine deacetylase (308 aa).

3 residues coordinate Zn(2+): His-78, His-235, and Asp-239. His-262 serves as the catalytic Proton donor.

The protein belongs to the LpxC family. The cofactor is Zn(2+).

It carries out the reaction a UDP-3-O-[(3R)-3-hydroxyacyl]-N-acetyl-alpha-D-glucosamine + H2O = a UDP-3-O-[(3R)-3-hydroxyacyl]-alpha-D-glucosamine + acetate. It functions in the pathway glycolipid biosynthesis; lipid IV(A) biosynthesis; lipid IV(A) from (3R)-3-hydroxytetradecanoyl-[acyl-carrier-protein] and UDP-N-acetyl-alpha-D-glucosamine: step 2/6. In terms of biological role, catalyzes the hydrolysis of UDP-3-O-myristoyl-N-acetylglucosamine to form UDP-3-O-myristoylglucosamine and acetate, the committed step in lipid A biosynthesis. This Anaeromyxobacter dehalogenans (strain 2CP-C) protein is UDP-3-O-acyl-N-acetylglucosamine deacetylase.